The primary structure comprises 427 residues: Glucose-1-phosphate adenylyltransferase (427 aa).

Alpha-D-glucose 1-phosphate is bound by residues Tyr-121, Gly-186, 201–202 (EK), and Ser-219.

Belongs to the bacterial/plant glucose-1-phosphate adenylyltransferase family. As to quaternary structure, homotetramer.

It carries out the reaction alpha-D-glucose 1-phosphate + ATP + H(+) = ADP-alpha-D-glucose + diphosphate. It participates in glycan biosynthesis; glycogen biosynthesis. Its function is as follows. Involved in the biosynthesis of ADP-glucose, a building block required for the elongation reactions to produce glycogen. Catalyzes the reaction between ATP and alpha-D-glucose 1-phosphate (G1P) to produce pyrophosphate and ADP-Glc. The chain is Glucose-1-phosphate adenylyltransferase from Corynebacterium diphtheriae (strain ATCC 700971 / NCTC 13129 / Biotype gravis).